A 342-amino-acid chain; its full sequence is Glyceraldehyde-3-phosphate dehydrogenase (342 aa).

NAD(+)-binding positions include 12-13, Asp34, Lys78, and Thr120; that span reads RI. Residues 151–153 and Thr182 each bind D-glyceraldehyde 3-phosphate; that span reads SCT. Cys152 (nucleophile) is an active-site residue. NAD(+) is bound at residue Asn183. D-glyceraldehyde 3-phosphate contacts are provided by residues Arg197, 210–211, and Arg233; that span reads TG. Residue Asn322 participates in NAD(+) binding.

It belongs to the glyceraldehyde-3-phosphate dehydrogenase family. As to quaternary structure, homotetramer.

The protein resides in the cytoplasm. The catalysed reaction is D-glyceraldehyde 3-phosphate + phosphate + NAD(+) = (2R)-3-phospho-glyceroyl phosphate + NADH + H(+). It functions in the pathway carbohydrate degradation; glycolysis; pyruvate from D-glyceraldehyde 3-phosphate: step 1/5. Functionally, catalyzes the oxidative phosphorylation of glyceraldehyde 3-phosphate (G3P) to 1,3-bisphosphoglycerate (BPG) using the cofactor NAD. The first reaction step involves the formation of a hemiacetal intermediate between G3P and a cysteine residue, and this hemiacetal intermediate is then oxidized to a thioester, with concomitant reduction of NAD to NADH. The reduced NADH is then exchanged with the second NAD, and the thioester is attacked by a nucleophilic inorganic phosphate to produce BPG. The chain is Glyceraldehyde-3-phosphate dehydrogenase (gap) from Aquifex aeolicus (strain VF5).